Reading from the N-terminus, the 210-residue chain is Outer-membrane lipoprotein LolB (210 aa).

The first 18 residues, 1–18, serve as a signal peptide directing secretion; it reads MKKFTKILSLSTLLFLAG. A lipid anchor (N-palmitoyl cysteine) is attached at cysteine 19. A lipid anchor (S-diacylglycerol cysteine) is attached at cysteine 19.

Belongs to the LolB family. In terms of assembly, monomer.

The protein resides in the cell outer membrane. Functionally, plays a critical role in the incorporation of lipoproteins in the outer membrane after they are released by the LolA protein. This chain is Outer-membrane lipoprotein LolB, found in Actinobacillus pleuropneumoniae serotype 7 (strain AP76).